A 51-amino-acid polypeptide reads, in one-letter code: Large ribosomal subunit protein eL39 (51 aa).

Positions 1–23 (MPSQKSFRTKQKLAKAQKQNRPL) are disordered.

The protein belongs to the eukaryotic ribosomal protein eL39 family. Component of the large ribosomal subunit. Mature ribosomes consist of a small (40S) and a large (60S) subunit. The 40S subunit contains about 32 different proteins and 1 molecule of RNA (18S). The 60S subunit contains 45 different proteins and 3 molecules of RNA (25S, 5.8S and 5S).

The protein resides in the cytoplasm. Functionally, component of the ribosome, a large ribonucleoprotein complex responsible for the synthesis of proteins in the cell. The small ribosomal subunit (SSU) binds messenger RNAs (mRNAs) and translates the encoded message by selecting cognate aminoacyl-transfer RNA (tRNA) molecules. The large subunit (LSU) contains the ribosomal catalytic site termed the peptidyl transferase center (PTC), which catalyzes the formation of peptide bonds, thereby polymerizing the amino acids delivered by tRNAs into a polypeptide chain. The nascent polypeptides leave the ribosome through a tunnel in the LSU and interact with protein factors that function in enzymatic processing, targeting, and the membrane insertion of nascent chains at the exit of the ribosomal tunnel. This chain is Large ribosomal subunit protein eL39, found in Candida albicans (strain SC5314 / ATCC MYA-2876) (Yeast).